Consider the following 393-residue polypeptide: Phospholipase A1-II 1 (393 aa).

Residues 200–220 (QVLNEIKRLQDMYEHEETSIT) are a coiled coil. Ser225 functions as the Acyl-ester intermediate in the catalytic mechanism. Catalysis depends on charge relay system residues Ser225, Asp284, and His321.

Belongs to the AB hydrolase superfamily. Lipase family.

It localises to the cytoplasm. Acylhydrolase that catalyzes the hydrolysis of phospholipids at the sn-1 position. In Oryza sativa subsp. indica (Rice), this protein is Phospholipase A1-II 1.